A 498-amino-acid chain; its full sequence is Glycerol kinase (498 aa).

Threonine 12 contributes to the ADP binding site. ATP is bound by residues threonine 12, threonine 13, and serine 14. Threonine 12 provides a ligand contact to sn-glycerol 3-phosphate. Arginine 16 provides a ligand contact to ADP. Residues arginine 82, glutamate 83, tyrosine 134, and aspartate 243 each contribute to the sn-glycerol 3-phosphate site. 5 residues coordinate glycerol: arginine 82, glutamate 83, tyrosine 134, aspartate 243, and glutamine 244. The ADP site is built by threonine 265 and glycine 308. The ATP site is built by threonine 265, glycine 308, glutamine 312, and glycine 412. Residue glycine 412 participates in ADP binding.

The protein belongs to the FGGY kinase family.

The catalysed reaction is glycerol + ATP = sn-glycerol 3-phosphate + ADP + H(+). It participates in polyol metabolism; glycerol degradation via glycerol kinase pathway; sn-glycerol 3-phosphate from glycerol: step 1/1. Its activity is regulated as follows. Inhibited by fructose 1,6-bisphosphate (FBP). Its function is as follows. Key enzyme in the regulation of glycerol uptake and metabolism. Catalyzes the phosphorylation of glycerol to yield sn-glycerol 3-phosphate. This chain is Glycerol kinase, found in Rhizobium rhizogenes (strain K84 / ATCC BAA-868) (Agrobacterium radiobacter).